The primary structure comprises 543 residues: Sodium-dependent lysophosphatidylcholine symporter 1 (543 aa).

Low complexity predominate over residues M1–G14. The segment at M1–P34 is disordered. Topologically, residues M1–Q40 are cytoplasmic. Residues L41–Y70 traverse the membrane as a helical segment. The Extracellular portion of the chain corresponds to L71–S94. A helical membrane pass occupies residues A95–L115. Over C116–R127 the chain is Cytoplasmic. The chain crosses the membrane as a helical span at residues L128–W147. Residues F148 to T157 lie on the Extracellular side of the membrane. A helical membrane pass occupies residues Y158–T182. The Cytoplasmic segment spans residues M183–Q189. The chain crosses the membrane as a helical span at residues T190–A221. The Extracellular segment spans residues D222 to H241. The cysteines at positions 225 and 473 are disulfide-linked. Residues N230 and N240 are each glycosylated (N-linked (GlcNAc...) asparagine). Residues T242–L275 form a helical membrane-spanning segment. The Cytoplasmic portion of the chain corresponds to G276 to P306. Residues Y307–T333 form a helical membrane-spanning segment. At Y334 to N344 the chain is on the extracellular side. A helical membrane pass occupies residues L345–F363. Residues L364–F367 are Cytoplasmic-facing. The helical transmembrane segment at G368–L389 threads the bilayer. Residues M390–S392 lie on the Extracellular side of the membrane. Residues N393–K429 traverse the membrane as a helical segment. Residues Q430 to I439 lie on the Cytoplasmic side of the membrane. A helical transmembrane segment spans residues F440–A466. The Extracellular portion of the chain corresponds to G467–R478. A helical membrane pass occupies residues V479 to F502. The Cytoplasmic segment spans residues K503–L543.

This sequence belongs to the major facilitator superfamily. As to quaternary structure, interacts with ERVFRD-1/syncytin-2. In placenta, associated with trophoblast cells.

Its subcellular location is the cell membrane. It is found in the endoplasmic reticulum membrane. The enzyme catalyses a 1-acyl-sn-glycero-3-phosphocholine(in) + Na(+)(in) = a 1-acyl-sn-glycero-3-phosphocholine(out) + Na(+)(out). It catalyses the reaction 1-(4Z,7Z,10Z,13Z,16Z,19Z-docosahexaenoyl)-sn-glycero-3-phosphocholine(in) + Na(+)(in) = 1-(4Z,7Z,10Z,13Z,16Z,19Z-docosahexaenoyl)-sn-glycero-3-phosphocholine(out) + Na(+)(out). It carries out the reaction 1-(9Z-octadecenoyl)-sn-glycero-3-phosphocholine(in) + Na(+)(in) = 1-(9Z-octadecenoyl)-sn-glycero-3-phosphocholine(out) + Na(+)(out). The catalysed reaction is 1-hexadecanoyl-sn-glycero-3-phosphocholine(in) + Na(+)(in) = 1-hexadecanoyl-sn-glycero-3-phosphocholine(out) + Na(+)(out). The enzyme catalyses a 1-acyl-sn-glycero-3-phosphoethanolamine(in) + Na(+)(in) = a 1-acyl-sn-glycero-3-phosphoethanolamine(out) + Na(+)(out). Sodium-dependent lysophosphatidylcholine (LPC) symporter, which plays an essential role for blood-brain barrier formation and function. Specifically expressed in endothelium of the blood-brain barrier of micro-vessels and transports LPC into the brain. Transport of LPC is essential because it constitutes the major mechanism by which docosahexaenoic acid (DHA), an omega-3 fatty acid that is essential for normal brain growth and cognitive function, enters the brain. Transports LPC carrying long-chain fatty acids such LPC oleate and LPC palmitate with a minimum acyl chain length of 14 carbons. Does not transport docosahexaenoic acid in unesterified fatty acid. Specifically required for blood-brain barrier formation and function, probably by mediating lipid transport. Not required for central nervous system vascular morphogenesis. Acts as a transporter for tunicamycin, an inhibitor of asparagine-linked glycosylation. In placenta, acts as a receptor for ERVFRD-1/syncytin-2 and is required for trophoblast fusion. The polypeptide is Sodium-dependent lysophosphatidylcholine symporter 1 (Homo sapiens (Human)).